Consider the following 156-residue polypeptide: SsrA-binding protein (156 aa).

This sequence belongs to the SmpB family.

It is found in the cytoplasm. In terms of biological role, required for rescue of stalled ribosomes mediated by trans-translation. Binds to transfer-messenger RNA (tmRNA), required for stable association of tmRNA with ribosomes. tmRNA and SmpB together mimic tRNA shape, replacing the anticodon stem-loop with SmpB. tmRNA is encoded by the ssrA gene; the 2 termini fold to resemble tRNA(Ala) and it encodes a 'tag peptide', a short internal open reading frame. During trans-translation Ala-aminoacylated tmRNA acts like a tRNA, entering the A-site of stalled ribosomes, displacing the stalled mRNA. The ribosome then switches to translate the ORF on the tmRNA; the nascent peptide is terminated with the 'tag peptide' encoded by the tmRNA and targeted for degradation. The ribosome is freed to recommence translation, which seems to be the essential function of trans-translation. In Renibacterium salmoninarum (strain ATCC 33209 / DSM 20767 / JCM 11484 / NBRC 15589 / NCIMB 2235), this protein is SsrA-binding protein.